Consider the following 145-residue polypeptide: Deoxyuridine 5'-triphosphate nucleotidohydrolase (145 aa).

Substrate contacts are provided by residues 63–65, Gln-76, and 80–82; these read RSG and TVD.

The protein belongs to the dUTPase family. Mg(2+) is required as a cofactor.

It catalyses the reaction dUTP + H2O = dUMP + diphosphate + H(+). It functions in the pathway pyrimidine metabolism; dUMP biosynthesis; dUMP from dCTP (dUTP route): step 2/2. This enzyme is involved in nucleotide metabolism: it produces dUMP, the immediate precursor of thymidine nucleotides and it decreases the intracellular concentration of dUTP so that uracil cannot be incorporated into DNA. The polypeptide is Deoxyuridine 5'-triphosphate nucleotidohydrolase (Chlamydia trachomatis serovar L2 (strain ATCC VR-902B / DSM 19102 / 434/Bu)).